Reading from the N-terminus, the 87-residue chain is HssA/B-like protein 55 (87 aa).

The span at 1-13 (MTILSAITSISRP) shows a compositional bias: polar residues. The tract at residues 1 to 31 (MTILSAITSISRPNKSSKSVVSSNGGSSLSM) is disordered. The segment covering 14–31 (NKSSKSVVSSNGGSSLSM) has biased composition (low complexity).

This sequence belongs to the hssA/B family.

The chain is HssA/B-like protein 55 (hssl55) from Dictyostelium discoideum (Social amoeba).